Here is a 453-residue protein sequence, read N- to C-terminus: Probable phenylalanine--tRNA ligase, mitochondrial (453 aa).

The N-terminal 27 residues, 1–27, are a transit peptide targeting the mitochondrion; that stretch reads MLLTLRVQGARHWLKSTRCLASSAAPA. Residues 142-145, Arg164, 171-173, 178-180, Glu285, and Phe310 each bind substrate; these read TAHQ, THY, and QAD. In terms of domain architecture, FDX-ACB spans 356–453; it reads SHYPQCTNDL…SVDSFNVQIR (98 aa).

The protein belongs to the class-II aminoacyl-tRNA synthetase family.

It is found in the mitochondrion matrix. It carries out the reaction tRNA(Phe) + L-phenylalanine + ATP = L-phenylalanyl-tRNA(Phe) + AMP + diphosphate + H(+). In terms of biological role, is responsible for the charging of tRNA(Phe) with phenylalanine in mitochondrial translation. In Drosophila melanogaster (Fruit fly), this protein is Probable phenylalanine--tRNA ligase, mitochondrial.